Here is a 175-residue protein sequence, read N- to C-terminus: GTP-dependent dephospho-CoA kinase (175 aa).

D48, V49, V50, D66, and E124 together coordinate GTP.

This sequence belongs to the GTP-dependent DPCK family.

The enzyme catalyses 3'-dephospho-CoA + GTP = GDP + CoA + H(+). Its pathway is cofactor biosynthesis; coenzyme A biosynthesis. Functionally, catalyzes the GTP-dependent phosphorylation of the 3'-hydroxyl group of dephosphocoenzyme A to form coenzyme A (CoA). This Thermofilum pendens (strain DSM 2475 / Hrk 5) protein is GTP-dependent dephospho-CoA kinase.